The following is a 113-amino-acid chain: Nucleoid-associated protein EUBREC_0329 (113 aa).

The segment covering 1 to 12 has biased composition (gly residues); the sequence is MARRGGFPGGMP. The segment at 1–45 is disordered; the sequence is MARRGGFPGGMPGNMNNLMKQAQKMQRQMEEAQKQLEDAEVTAKA. The span at 27-37 shows a compositional bias: basic and acidic residues; that stretch reads RQMEEAQKQLE.

This sequence belongs to the YbaB/EbfC family. As to quaternary structure, homodimer.

It localises to the cytoplasm. The protein resides in the nucleoid. Functionally, binds to DNA and alters its conformation. May be involved in regulation of gene expression, nucleoid organization and DNA protection. In Agathobacter rectalis (strain ATCC 33656 / DSM 3377 / JCM 17463 / KCTC 5835 / VPI 0990) (Eubacterium rectale), this protein is Nucleoid-associated protein EUBREC_0329.